The sequence spans 270 residues: Formamidopyrimidine-DNA glycosylase (270 aa).

Proline 2 functions as the Schiff-base intermediate with DNA in the catalytic mechanism. Residue glutamate 3 is the Proton donor of the active site. The active-site Proton donor; for beta-elimination activity is the lysine 58. 3 residues coordinate DNA: histidine 91, arginine 110, and lysine 151. The segment at 236–270 (LVYGKAGAPCTECNTPLKEIRMNNRSTVYCPRCQR) adopts an FPG-type zinc-finger fold. Arginine 260 serves as the catalytic Proton donor; for delta-elimination activity.

Belongs to the FPG family. In terms of assembly, monomer. Zn(2+) is required as a cofactor.

It carries out the reaction Hydrolysis of DNA containing ring-opened 7-methylguanine residues, releasing 2,6-diamino-4-hydroxy-5-(N-methyl)formamidopyrimidine.. The catalysed reaction is 2'-deoxyribonucleotide-(2'-deoxyribose 5'-phosphate)-2'-deoxyribonucleotide-DNA = a 3'-end 2'-deoxyribonucleotide-(2,3-dehydro-2,3-deoxyribose 5'-phosphate)-DNA + a 5'-end 5'-phospho-2'-deoxyribonucleoside-DNA + H(+). In terms of biological role, involved in base excision repair of DNA damaged by oxidation or by mutagenic agents. Acts as a DNA glycosylase that recognizes and removes damaged bases. Has a preference for oxidized purines, such as 7,8-dihydro-8-oxoguanine (8-oxoG). Has AP (apurinic/apyrimidinic) lyase activity and introduces nicks in the DNA strand. Cleaves the DNA backbone by beta-delta elimination to generate a single-strand break at the site of the removed base with both 3'- and 5'-phosphates. The protein is Formamidopyrimidine-DNA glycosylase of Marinobacter nauticus (strain ATCC 700491 / DSM 11845 / VT8) (Marinobacter aquaeolei).